The sequence spans 418 residues: Bile acid-CoA:amino acid N-acyltransferase (418 aa).

Ser-125 carries the post-translational modification Phosphoserine. Active-site charge relay system residues include Cys-235, Asp-328, and His-362. Residue Ser-416 is modified to Phosphoserine.

The protein belongs to the C/M/P thioester hydrolase family. As to quaternary structure, monomer. Expressed in the gallbladder mucosa and pancreas. Expressed in hepatocytes (at protein level).

It localises to the cytoplasm. Its subcellular location is the cytosol. The protein resides in the peroxisome. It carries out the reaction choloyl-CoA + glycine = glycocholate + CoA + H(+). The enzyme catalyses hexadecanoyl-CoA + H2O = hexadecanoate + CoA + H(+). It catalyses the reaction choloyl-CoA + H2O = cholate + CoA + H(+). The catalysed reaction is chenodeoxycholoyl-CoA + H2O = chenodeoxycholate + CoA + H(+). It carries out the reaction eicosanoyl-CoA + H2O = eicosanoate + CoA + H(+). The enzyme catalyses octadecanoyl-CoA + H2O = octadecanoate + CoA + H(+). It catalyses the reaction docosanoyl-CoA + H2O = docosanoate + CoA + H(+). The catalysed reaction is tetracosanoyl-CoA + H2O = tetracosanoate + CoA + H(+). It carries out the reaction hexacosanoyl-CoA + H2O = hexacosanoate + CoA + H(+). The enzyme catalyses dodecanoyl-CoA + H2O = dodecanoate + CoA + H(+). It catalyses the reaction tetradecanoyl-CoA + H2O = tetradecanoate + CoA + H(+). The catalysed reaction is choloyl-CoA + taurine = taurocholate + CoA + H(+). It carries out the reaction chenodeoxycholoyl-CoA + glycine = glycochenodeoxycholate + CoA + H(+). The enzyme catalyses chenodeoxycholoyl-CoA + taurine = taurochenodeoxycholate + CoA + H(+). It catalyses the reaction eicosanoyl-CoA + glycine = N-eicosanoylglycinate + CoA + H(+). The catalysed reaction is hexacosanoyl-CoA + glycine = N-hexacosanoylglycine + CoA + H(+). It carries out the reaction docosanoyl-CoA + glycine = N-docosanoylglycine + CoA + H(+). Its function is as follows. Catalyzes the amidation of bile acids (BAs) with the amino acids taurine and glycine. More than 95% of the BAs are N-acyl amidates with glycine and taurine. Amidation of BAs in the liver with glycine or taurine prior to their excretion into bile is an important biochemical event in bile acid metabolism. This conjugation (or amidation) plays several important biological roles in that it promotes the secretion of BAs and cholesterol into bile and increases the detergent properties of BAs in the intestine, which facilitates lipid and vitamin absorption. May also act as an acyl-CoA thioesterase that regulates intracellular levels of free fatty acids. In vitro, catalyzes the hydrolysis of long- and very long-chain saturated acyl-CoAs to the free fatty acid and coenzyme A (CoASH), and conjugates glycine to these acyl-CoAs. This chain is Bile acid-CoA:amino acid N-acyltransferase (BAAT), found in Homo sapiens (Human).